Consider the following 196-residue polypeptide: Large ribosomal subunit protein bL9 (196 aa).

A disordered region spans residues 174–196 (QAAADLLEGGAGQQASEYTEAQA). The span at 186–196 (QQASEYTEAQA) shows a compositional bias: polar residues.

This sequence belongs to the bacterial ribosomal protein bL9 family.

Binds to the 23S rRNA. The protein is Large ribosomal subunit protein bL9 of Phenylobacterium zucineum (strain HLK1).